The chain runs to 333 residues: NADH-ubiquinone oxidoreductase chain 2 (333 aa).

Transmembrane regions (helical) follow at residues 10 to 30, 57 to 77, 91 to 111, 121 to 141, 143 to 163, 170 to 190, 192 to 212, 242 to 262, 267 to 287, and 313 to 333; these read WFIY…NIFI, LIYY…IIVY, FMVQ…FWMI, QIFL…VSMT, INSW…FYAN, KLLA…LELN, NMFI…ISFL, MYPI…MVSV, WILF…IIIL, and SYFA…LNFL.

Belongs to the complex I subunit 2 family.

It localises to the mitochondrion inner membrane. The enzyme catalyses a ubiquinone + NADH + 5 H(+)(in) = a ubiquinol + NAD(+) + 4 H(+)(out). Core subunit of the mitochondrial membrane respiratory chain NADH dehydrogenase (Complex I) that is believed to belong to the minimal assembly required for catalysis. Complex I functions in the transfer of electrons from NADH to the respiratory chain. The immediate electron acceptor for the enzyme is believed to be ubiquinone. The polypeptide is NADH-ubiquinone oxidoreductase chain 2 (ND2) (Apis mellifera ligustica (Common honeybee)).